The primary structure comprises 389 residues: Gastricsin (389 aa).

The first 16 residues, 1–16 (MKWMVVVLLCLQLLEA), serve as a signal peptide directing secretion. Residues 17 to 59 (KVVKVPLKKLKSLRETMKEKGLLEEFLKNHKYDPAQKYRYTDF) constitute a propeptide, activation peptide. The Peptidase A1 domain maps to 73 to 386 (YFGEISIGTP…DMGNNRVGFA (314 aa)). Asp91 is a catalytic residue. Intrachain disulfides connect Cys104–Cys109 and Cys268–Cys272. The active site involves Asp277. A disulfide bridge connects residues Cys311 and Cys344.

The protein belongs to the peptidase A1 family.

Its subcellular location is the secreted. It catalyses the reaction More restricted specificity than pepsin A, but shows preferential cleavage at Tyr-|-Xaa bonds. High activity on hemoglobin.. Hydrolyzes a variety of proteins. In Rhinolophus ferrumequinum (Greater horseshoe bat), this protein is Gastricsin (PGC).